The chain runs to 76 residues: ATP synthase subunit 9, mitochondrial (76 aa).

Transmembrane regions (helical) follow at residues 10-30 and 52-72; these read IGAG…AIVF and ILGF…SFLL.

This sequence belongs to the ATPase C chain family. F-type ATPases have 2 components, CF(1) - the catalytic core - and CF(0) - the membrane proton channel. CF(1) has five subunits: alpha(3), beta(3), gamma(1), delta(1), epsilon(1). CF(0) has three main subunits: a, b and c.

It is found in the mitochondrion membrane. In terms of biological role, mitochondrial membrane ATP synthase (F(1)F(0) ATP synthase or Complex V) produces ATP from ADP in the presence of a proton gradient across the membrane which is generated by electron transport complexes of the respiratory chain. F-type ATPases consist of two structural domains, F(1) - containing the extramembraneous catalytic core and F(0) - containing the membrane proton channel, linked together by a central stalk and a peripheral stalk. During catalysis, ATP synthesis in the catalytic domain of F(1) is coupled via a rotary mechanism of the central stalk subunits to proton translocation. Part of the complex F(0) domain. A homomeric c-ring of probably 10 subunits is part of the complex rotary element. The sequence is that of ATP synthase subunit 9, mitochondrial (ATP9) from Kluyveromyces lactis (strain ATCC 8585 / CBS 2359 / DSM 70799 / NBRC 1267 / NRRL Y-1140 / WM37) (Yeast).